A 357-amino-acid chain; its full sequence is Alternative oxidase, mitochondrial (357 aa).

Residues 152-172 traverse the membrane as a helical segment; sequence LTRCIFLESIAGVPGAVASFI. Fe cation-binding residues include glutamate 159, glutamate 198, and histidine 201. A helical membrane pass occupies residues 218–238; it reads IIYVGQGVFCNLFFLFYLANP. Residues glutamate 249, glutamate 304, and histidine 307 each coordinate Fe cation. Residues 330–357 form a disordered region; sequence IPDLKEPQPESGLKVTKPHGWEKEELKL. Residues 348 to 357 are compositionally biased toward basic and acidic residues; it reads HGWEKEELKL.

Belongs to the alternative oxidase family. Requires Fe cation as cofactor.

It localises to the mitochondrion inner membrane. Functionally, catalyzes cyanide-resistant oxygen consumption. May increase respiration when the cytochrome respiratory pathway is restricted, or in response to low temperatures. In Scheffersomyces stipitis (strain ATCC 58785 / CBS 6054 / NBRC 10063 / NRRL Y-11545) (Yeast), this protein is Alternative oxidase, mitochondrial (STO1).